Consider the following 325-residue polypeptide: DNA repair and recombination protein RadA (325 aa).

An ATP-binding site is contributed by 107–114 (GEFGSGKT).

It belongs to the eukaryotic RecA-like protein family.

In terms of biological role, involved in DNA repair and in homologous recombination. Binds and assemble on single-stranded DNA to form a nucleoprotein filament. Hydrolyzes ATP in a ssDNA-dependent manner and promotes DNA strand exchange between homologous DNA molecules. The polypeptide is DNA repair and recombination protein RadA (Methanosarcina acetivorans (strain ATCC 35395 / DSM 2834 / JCM 12185 / C2A)).